A 273-amino-acid polypeptide reads, in one-letter code: MIKWLQRAGCLSAHAVVPQAPAAASVQGRHDLAFDTISNARDLGGLAGAGGRRVRQGRLYRSGNPALASAADLERLQTLGLDMVVDFRSPGEKSPEEAAFGQRFHWVAAPVLEGSMAMDVLMPRLRASTPAQMDAFMLEVYGDFPVRYREAFAGFMRTAQGGKTLLFHCTAGKDRTGFAALLLLAALGVAQDDILANYLESNQRNAQFNQTALARMAGLGVAPAVMTPLLEVRASYLDASMRAIDAGWGSVDNYLRDALEVDVAQLRGHYLAG.

Positions methionine 1–alanine 15 are cleaved as a signal peptide. Cysteine 169 serves as the catalytic Phosphocysteine intermediate.

It belongs to the protein-tyrosine phosphatase family.

It carries out the reaction O-phospho-L-tyrosyl-[protein] + H2O = L-tyrosyl-[protein] + phosphate. This chain is Putative tyrosine-protein phosphatase H16_A0669, found in Cupriavidus necator (strain ATCC 17699 / DSM 428 / KCTC 22496 / NCIMB 10442 / H16 / Stanier 337) (Ralstonia eutropha).